Reading from the N-terminus, the 619-residue chain is Very-long-chain aldehyde decarbonylase GL1-4 (619 aa).

Transmembrane regions (helical) follow at residues 45–65 (IAFS…QIWI), 94–114 (GWDD…LAMP), 126–146 (GAVV…YWFH), 178–198 (FAEH…TIYL), and 325–345 (AWYM…AWIY). The 135-residue stretch at 138-272 (VEFLYYWFHR…MPFYDYIYNT (135 aa)) folds into the Fatty acid hydroxylase domain.

The protein belongs to the sterol desaturase family. In terms of assembly, homodimer.

The protein localises to the endoplasmic reticulum membrane. The catalysed reaction is a long-chain fatty aldehyde + 2 NADPH + O2 + H(+) = a long-chain alkane + formate + 2 NADP(+) + H2O. Functionally, aldehyde decarbonylase involved in the conversion of aldehydes to alkanes. Core component of a very-long-chain alkane synthesis complex. The chain is Very-long-chain aldehyde decarbonylase GL1-4 from Oryza sativa subsp. indica (Rice).